The primary structure comprises 1358 residues: Retrotransposon-like protein 1 (1358 aa).

Disordered regions lie at residues 1–159 and 563–616; these read MIEP…TEHS and ADVF…TAPW. Positions 19 to 30 are enriched in low complexity; sequence SSKQMESSEGSS. The segment covering 65 to 79 has biased composition (acidic residues); it reads EMEELPTDLLQDMEE. The span at 131–149 shows a compositional bias: basic and acidic residues; sequence AREEQEAHTDLKESGREET. Positions 583–592 are enriched in acidic residues; it reads GSDDLSESEP. Transmembrane regions (helical) follow at residues 1083 to 1099 and 1126 to 1146; these read LLYWKNTLALAAILVLL and LILDSSLIAGSSITTAITQLL. Disordered stretches follow at residues 1250-1283 and 1338-1358; these read DGLQDTSQDKQDNDVQEAPPSHTAATHPPRPRHL and QPREQARLEELPDEDEDANLD. Residues 1267–1276 are compositionally biased toward low complexity; it reads APPSHTAATH. The segment covering 1338–1347 has biased composition (basic and acidic residues); the sequence is QPREQARLEE. The span at 1348–1358 shows a compositional bias: acidic residues; the sequence is LPDEDEDANLD.

The protein localises to the membrane. Plays an essential role in capillaries endothelial cells for the maintenance of feto-maternal interface and for development of the placenta. The polypeptide is Retrotransposon-like protein 1 (RTL1) (Homo sapiens (Human)).